A 149-amino-acid polypeptide reads, in one-letter code: 3-dehydroquinate dehydratase (149 aa).

Residue tyrosine 25 is the Proton acceptor of the active site. Substrate is bound by residues asparagine 76, histidine 82, and aspartate 89. Catalysis depends on histidine 102, which acts as the Proton donor. Substrate-binding positions include 103–104 (LS) and arginine 113.

Belongs to the type-II 3-dehydroquinase family. As to quaternary structure, homododecamer.

The enzyme catalyses 3-dehydroquinate = 3-dehydroshikimate + H2O. The protein operates within metabolic intermediate biosynthesis; chorismate biosynthesis; chorismate from D-erythrose 4-phosphate and phosphoenolpyruvate: step 3/7. Its function is as follows. Catalyzes a trans-dehydration via an enolate intermediate. The chain is 3-dehydroquinate dehydratase from Acaryochloris marina (strain MBIC 11017).